Here is a 327-residue protein sequence, read N- to C-terminus: GTPase Obg (327 aa).

The region spanning 1 to 159 is the Obg domain; it reads MQFIDQANII…WEVQLELKLL (159 aa). Residues 160-327 enclose the OBG-type G domain; it reads AEVGIIGLPN…SLLFEVWKRI (168 aa). Residues 166 to 173, 191 to 195, 213 to 216, 280 to 283, and 309 to 311 contribute to the ATP site; these read GLPNAGKS, FTTLI, DIPG, NKME, and SSS. Mg(2+) is bound by residues Ser173 and Thr193.

It belongs to the TRAFAC class OBG-HflX-like GTPase superfamily. OBG GTPase family. As to quaternary structure, monomer. The cofactor is Mg(2+).

It is found in the cytoplasm. An essential GTPase which binds GTP, GDP and possibly (p)ppGpp with moderate affinity, with high nucleotide exchange rates and a fairly low GTP hydrolysis rate. Plays a role in control of the cell cycle, stress response, ribosome biogenesis and in those bacteria that undergo differentiation, in morphogenesis control. This is GTPase Obg from Prochlorococcus marinus (strain MIT 9312).